Reading from the N-terminus, the 108-residue chain is Synaptobrevin-1 (108 aa).

The interval 1–25 is disordered; the sequence is MDAQGDAGAQGGSQGPRPSNKRLQQ. Residues 1–85 are Cytoplasmic-facing; it reads MDAQGDAGAQ…KRKYWWKNIK (85 aa). Residues 22-82 form the v-SNARE coiled-coil homology domain; sequence RLQQTQAQVD…ATLKRKYWWK (61 aa). Residues 86–106 traverse the membrane as a helical; Anchor for type IV membrane protein segment; that stretch reads MMIIMCAIVVILIIIIVLWAG. The Extracellular segment spans residues 107–108; that stretch reads GK.

Belongs to the synaptobrevin family. In terms of assembly, part of the SNARE core complex containing CBG09569/SNAP25, snb-1/VAMP2 and CBG03570/STX1A. This complex binds to cpx-1/CPLX1.

The protein localises to the cytoplasmic vesicle. The protein resides in the secretory vesicle. It localises to the synaptic vesicle membrane. It is found in the cell membrane. Its subcellular location is the synapse. The protein localises to the synaptosome. In terms of biological role, involved in the targeting and/or fusion of transport vesicles to their target membrane. Acts in neuronal exocytosis of synaptic transmission. Likely to have a role in cholinergic transmisson. Required for viability, coordinated movement and M3 pharynx motor neuron function. The protein is Synaptobrevin-1 of Caenorhabditis briggsae.